The sequence spans 131 residues: Putative gamma-taxilin 2 (131 aa).

This sequence belongs to the taxilin family. Ubiquitously expressed.

This chain is Putative gamma-taxilin 2 (TXLNGY), found in Homo sapiens (Human).